Consider the following 264-residue polypeptide: Short chain dehydrogenase/reductase dmxR18 (264 aa).

4 residues coordinate NADP(+): Ile-24, Asp-70, Asn-97, and Arg-130. Residues Ser-146 and Ser-147 each act as proton donor in the active site. NADP(+) is bound by residues Tyr-161, Lys-165, and Thr-196. The active-site Proton acceptor is Tyr-161. Lys-165 (lowers pKa of active site Tyr) is an active-site residue.

It belongs to the short-chain dehydrogenases/reductases (SDR) family.

The catalysed reaction is 3,8,9,10-tetrahydroxy-6-methyl-1,4-dihydroanthracen-1-one + NADPH + H(+) = (3R)-3,8,9,10-tetrahydroxy-6-methyl-1,2,3,4-tetrahydroanthracen-1-one + NADP(+). It participates in secondary metabolite biosynthesis. Short chain dehydrogenase/reductase; part of the gene cluster that mediates the biosynthesis of the dimeric xanthones cryptosporioptides. The pathway begins with the synthesis of atrochrysone thioester by the polyketide synthase dmx-nrPKS. The atrochrysone carboxyl ACP thioesterase dmxR1 then breaks the thioester bond and releases the atrochrysone carboxylic acid from dmx-nrPKS. Atrochrysone carboxylic acid is decarboxylated by the decarboxylase dmxR15, and oxidized by the anthrone oxygenase dmxR16 to yield emodin. Emodin is then reduced to emodin hydroquinone by the oxidoreductase dmxR7. A-ring reduction by the short chain dehydrogenase dmxR18, dehydration by the scytalone dehydratase-like protein dmxR17 and probable spontaneous re-oxidation, results in overall deoxygenation to chrysophanol. Baeyer-Villiger oxidation by the Baeyer-Villiger monooxygenase (BVMO) dmxR6 then yields monodictylactone in equilibrium with monodictyphenone. In the case of the cryptosporioptides biosynthesis, monodictylactone is reduced at C-12 to an alcohol (by the short chain dehydrogenases dmxR12 or dmxR8) and hydroxylated at C-5 by dmxR9, yielding the electron-rich aromatic which could eliminate H(2)O to form the ortho-quinonemethide, followed by tautomerisation to paraquinone and complete the formal reduction to produce the 10-methylgroup. Conjugate addition of C-4a-OH to the resulting paraquinone by the monooxygenase dmxR10 then gives cyclohexadienone, which is then reduced at C-5 by the short chain dehydrogenase dmxR3 to give the dihydroxanthone. The 6,7-epoxide in the cryptosporioptides could be introduced by the cytochrome P450 monooxygenase dmxL3. The highly reducing PKS dmxL2 manufactures butyrate, which is further carboxylated by dmxL1 to form ethylmalonate. It is not yet clear whether the carboxylation occurs while the butyrate is attached to the ACP of dmxL2, but this unusual fungal metabolite could then be esterified to O-5 by the O-acetyltransferase dmxR13. Finally, dimerization performed by dmxR5 gives the observed dimers cryptosporioptides A, B and C as the final products of the pathway. The sequence is that of Short chain dehydrogenase/reductase dmxR18 from Cryptosporiopsis sp. (strain 8999).